Consider the following 587-residue polypeptide: Phosphomethylpyrimidine synthase (587 aa).

The segment at 1-58 (MTPTQNEIHPKHSYSPIRKDGLEVPETEIRLDDSPSGPNEPFRIYRTRGPETNPKQGL) is disordered. Over residues 17–33 (IRKDGLEVPETEIRLDD) the composition is skewed to basic and acidic residues. Substrate is bound by residues Asn-180, Met-209, Tyr-238, His-274, 294-296 (SRG), 335-338 (DGLR), and Glu-374. Residue His-378 coordinates Zn(2+). Tyr-401 contacts substrate. His-442 is a binding site for Zn(2+). [4Fe-4S] cluster-binding residues include Cys-522, Cys-525, and Cys-530.

This sequence belongs to the ThiC family. Requires [4Fe-4S] cluster as cofactor.

It catalyses the reaction 5-amino-1-(5-phospho-beta-D-ribosyl)imidazole + S-adenosyl-L-methionine = 4-amino-2-methyl-5-(phosphooxymethyl)pyrimidine + CO + 5'-deoxyadenosine + formate + L-methionine + 3 H(+). The protein operates within cofactor biosynthesis; thiamine diphosphate biosynthesis. Its function is as follows. Catalyzes the synthesis of the hydroxymethylpyrimidine phosphate (HMP-P) moiety of thiamine from aminoimidazole ribotide (AIR) in a radical S-adenosyl-L-methionine (SAM)-dependent reaction. The protein is Phosphomethylpyrimidine synthase of Corynebacterium glutamicum (strain ATCC 13032 / DSM 20300 / JCM 1318 / BCRC 11384 / CCUG 27702 / LMG 3730 / NBRC 12168 / NCIMB 10025 / NRRL B-2784 / 534).